A 191-amino-acid chain; its full sequence is Large ribosomal subunit protein uL3 (191 aa).

A disordered region spans residues 115–137 (GGPASHGSRFHRRHGSIGNREWP).

The protein belongs to the universal ribosomal protein uL3 family. In terms of assembly, part of the 50S ribosomal subunit. Forms a cluster with proteins L14 and L19.

In terms of biological role, one of the primary rRNA binding proteins, it binds directly near the 3'-end of the 23S rRNA, where it nucleates assembly of the 50S subunit. The protein is Large ribosomal subunit protein uL3 (rplC) of Campylobacter jejuni subsp. jejuni serotype O:2 (strain ATCC 700819 / NCTC 11168).